Consider the following 525-residue polypeptide: GMP synthase [glutamine-hydrolyzing] (525 aa).

The Glutamine amidotransferase type-1 domain occupies 9 to 207; it reads RILILDFGSQ…VRDICQCEAL (199 aa). Cys86 (nucleophile) is an active-site residue. Catalysis depends on residues His181 and Glu183. Residues 208 to 400 enclose the GMPS ATP-PPase domain; that stretch reads WTPAKIIDDA…LGLPYDMLYR (193 aa). 235–241 lines the ATP pocket; the sequence is SGGVDSS.

Homodimer.

It catalyses the reaction XMP + L-glutamine + ATP + H2O = GMP + L-glutamate + AMP + diphosphate + 2 H(+). It participates in purine metabolism; GMP biosynthesis; GMP from XMP (L-Gln route): step 1/1. Catalyzes the synthesis of GMP from XMP. This chain is GMP synthase [glutamine-hydrolyzing], found in Shigella sonnei (strain Ss046).